Here is a 962-residue protein sequence, read N- to C-terminus: Glycine dehydrogenase (decarboxylating) (962 aa).

Lys-709 is subject to N6-(pyridoxal phosphate)lysine.

It belongs to the GcvP family. The glycine cleavage system is composed of four proteins: P, T, L and H. The cofactor is pyridoxal 5'-phosphate.

It carries out the reaction N(6)-[(R)-lipoyl]-L-lysyl-[glycine-cleavage complex H protein] + glycine + H(+) = N(6)-[(R)-S(8)-aminomethyldihydrolipoyl]-L-lysyl-[glycine-cleavage complex H protein] + CO2. Functionally, the glycine cleavage system catalyzes the degradation of glycine. The P protein binds the alpha-amino group of glycine through its pyridoxal phosphate cofactor; CO(2) is released and the remaining methylamine moiety is then transferred to the lipoamide cofactor of the H protein. The protein is Glycine dehydrogenase (decarboxylating) of Shewanella sp. (strain MR-4).